Here is a 549-residue protein sequence, read N- to C-terminus: Probable protein kinase UbiB (549 aa).

The Protein kinase domain maps to 123-501 (DFNDTPLASA…QQKSHKSNYL (379 aa)). ATP contacts are provided by residues 129 to 137 (LASASISQV) and Lys152. The active-site Proton acceptor is the Asp287. Transmembrane regions (helical) follow at residues 498-518 (SNYL…LFTQ) and 519-539 (IVTL…WAIG).

Belongs to the ABC1 family. UbiB subfamily.

The protein resides in the cell inner membrane. It functions in the pathway cofactor biosynthesis; ubiquinone biosynthesis [regulation]. In terms of biological role, is probably a protein kinase regulator of UbiI activity which is involved in aerobic coenzyme Q (ubiquinone) biosynthesis. The polypeptide is Probable protein kinase UbiB (Shewanella frigidimarina (strain NCIMB 400)).